We begin with the raw amino-acid sequence, 1193 residues long: Pyruvate carboxylase (1193 aa).

One can recognise a Biotin carboxylation domain in the interval 41–493 (QFQKILVANR…WTTFIDDTTE (453 aa)). Lysine 159, glutamate 243, and histidine 278 together coordinate ATP. The ATP-grasp domain maps to 163–360 (RQLAIRCNVP…IVAAQIQIAA (198 aa)). Arginine 335 is an active-site residue. In terms of domain architecture, Pyruvate carboxyltransferase spans 579–847 (CLIMDTTWRD…DPGLNSAHVR (269 aa)). Residues 587–591 (RDAHQ) and arginine 660 contribute to the substrate site. Aspartate 588 is a binding site for a divalent metal cation. A divalent metal cation is bound by residues lysine 756, histidine 786, and histidine 788. Lysine 756 carries the N6-carboxylysine modification. Threonine 921 serves as a coordination point for substrate. In terms of domain architecture, Biotinyl-binding spans 1116–1191 (KADVGDSSQV…DGQDLVCKIT (76 aa)). Lysine 1157 carries the post-translational modification N6-biotinyllysine.

Biotin is required as a cofactor. It depends on Zn(2+) as a cofactor.

The protein localises to the cytoplasm. It carries out the reaction hydrogencarbonate + pyruvate + ATP = oxaloacetate + ADP + phosphate + H(+). It functions in the pathway carbohydrate biosynthesis; gluconeogenesis. In terms of biological role, pyruvate carboxylase catalyzes a 2-step reaction, involving the ATP-dependent carboxylation of the covalently attached biotin in the first step and the transfer of the carboxyl group to pyruvate in the second. In Aspergillus terreus (strain NIH 2624 / FGSC A1156), this protein is Pyruvate carboxylase (pyc).